The following is a 391-amino-acid chain: DNA repair protein NreA (391 aa).

Residues 6 to 20 (CAECKGKLLCGRSKC) form a C4-type zinc finger. The PIP motif motif lies at 382 to 389 (QTSLASFF).

It belongs to the Nre family. As to quaternary structure, interacts with the DNA polymerase sliding clamp (PCNA) via the PIP (PCNA-interacting peptide) motif.

Involved in DNA damage repair. This Archaeoglobus fulgidus (strain ATCC 49558 / DSM 4304 / JCM 9628 / NBRC 100126 / VC-16) protein is DNA repair protein NreA.